We begin with the raw amino-acid sequence, 73 residues long: Translation initiation factor IF-1 (73 aa).

The S1-like domain maps to 1–73 (MPKKDGAIEI…SRGRIVYRYK (73 aa)).

Belongs to the IF-1 family. Component of the 30S ribosomal translation pre-initiation complex which assembles on the 30S ribosome in the order IF-2 and IF-3, IF-1 and N-formylmethionyl-tRNA(fMet); mRNA recruitment can occur at any time during PIC assembly.

Its subcellular location is the cytoplasm. One of the essential components for the initiation of protein synthesis. Stabilizes the binding of IF-2 and IF-3 on the 30S subunit to which N-formylmethionyl-tRNA(fMet) subsequently binds. Helps modulate mRNA selection, yielding the 30S pre-initiation complex (PIC). Upon addition of the 50S ribosomal subunit IF-1, IF-2 and IF-3 are released leaving the mature 70S translation initiation complex. The sequence is that of Translation initiation factor IF-1 from Frankia alni (strain DSM 45986 / CECT 9034 / ACN14a).